A 149-amino-acid polypeptide reads, in one-letter code: Endoribonuclease YbeY (149 aa).

The Zn(2+) site is built by H115, H119, and H125.

Belongs to the endoribonuclease YbeY family. Zn(2+) is required as a cofactor.

It is found in the cytoplasm. Its function is as follows. Single strand-specific metallo-endoribonuclease involved in late-stage 70S ribosome quality control and in maturation of the 3' terminus of the 16S rRNA. The sequence is that of Endoribonuclease YbeY from Mycoplasmopsis pulmonis (strain UAB CTIP) (Mycoplasma pulmonis).